Here is a 515-residue protein sequence, read N- to C-terminus: 1-pyrroline-5-carboxylate dehydrogenase (515 aa).

Catalysis depends on residues glutamate 286 and cysteine 320.

It belongs to the aldehyde dehydrogenase family. RocA subfamily.

It catalyses the reaction L-glutamate 5-semialdehyde + NAD(+) + H2O = L-glutamate + NADH + 2 H(+). It participates in amino-acid degradation; L-proline degradation into L-glutamate; L-glutamate from L-proline: step 2/2. The sequence is that of 1-pyrroline-5-carboxylate dehydrogenase from Bacillus pumilus (strain SAFR-032).